The following is a 263-amino-acid chain: RNA exonuclease 4 (263 aa).

The tract at residues 1-27 (MRLSSNWSKLQDGVTKKAGKKRIDKKP) is disordered. Basic residues predominate over residues 17 to 27 (KAGKKRIDKKP). The Exonuclease domain maps to 95–247 (YIAMDCEFVG…EDARATMLIY (153 aa)).

This sequence belongs to the REXO4 family.

The protein localises to the nucleus. Exoribonuclease involved in ribosome biosynthesis. Involved in the processing of ITS1, the internal transcribed spacer localized between the 18S and 5.8S rRNAs. This chain is RNA exonuclease 4 (REX4), found in Candida glabrata (strain ATCC 2001 / BCRC 20586 / JCM 3761 / NBRC 0622 / NRRL Y-65 / CBS 138) (Yeast).